The following is a 679-amino-acid chain: uncharacterized protein (679 aa).

12 helical membrane-spanning segments follow: residues 23 to 41 (YALR…AYYL), 46 to 65 (PYWA…GGVI), 72 to 90 (IAGS…GHTL), 94 to 113 (WLFL…ACAH), 120 to 142 (YAFQ…IVEI), 157 to 179 (IVGI…GTAL), 362 to 381 (WSGV…SIGA), 385 to 404 (SGPG…SIVA), 411 to 433 (SLLM…GLMV), 438 to 455 (LWQF…MQLL), 462 to 481 (LAGL…AVTN), and 496 to 515 (AKIV…RPGS).

This sequence belongs to the aromatic acid exporter ArAE (TC 2.A.85) family.

The protein resides in the cell membrane. This is an uncharacterized protein from Salmonella typhimurium (strain LT2 / SGSC1412 / ATCC 700720).